The sequence spans 398 residues: S-adenosylmethionine synthase (398 aa).

The segment at 1–21 (MAANRRLFTSESVTEGHPDKM) is disordered. His17 is a binding site for ATP. Asp19 lines the Mg(2+) pocket. K(+) is bound at residue Glu45. Glu58 and Gln101 together coordinate L-methionine. Residues 101–111 (QSADIAGGVNQ) are flexible loop. ATP is bound by residues 177 to 179 (DGK), 244 to 245 (RF), Asp253, 259 to 260 (RK), Ala276, and Lys280. Residue Asp253 participates in L-methionine binding. L-methionine is bound at residue Lys284.

This sequence belongs to the AdoMet synthase family. In terms of assembly, homotetramer; dimer of dimers. Mg(2+) serves as cofactor. The cofactor is K(+).

Its subcellular location is the cytoplasm. It carries out the reaction L-methionine + ATP + H2O = S-adenosyl-L-methionine + phosphate + diphosphate. Its pathway is amino-acid biosynthesis; S-adenosyl-L-methionine biosynthesis; S-adenosyl-L-methionine from L-methionine: step 1/1. Its function is as follows. Catalyzes the formation of S-adenosylmethionine (AdoMet) from methionine and ATP. The overall synthetic reaction is composed of two sequential steps, AdoMet formation and the subsequent tripolyphosphate hydrolysis which occurs prior to release of AdoMet from the enzyme. The polypeptide is S-adenosylmethionine synthase (Oceanobacillus iheyensis (strain DSM 14371 / CIP 107618 / JCM 11309 / KCTC 3954 / HTE831)).